The following is a 647-amino-acid chain: Endogenous retrovirus group K member 8 Gag polyprotein (647 aa).

The N-myristoyl glycine moiety is linked to residue Gly2. A disordered region spans residues 165–264 (GKGPELVGPS…APPSRQGSEL (100 aa)). Positions 232–247 (GMPPAPQGREPYPQPP) are enriched in pro residues. 2 consecutive CCHC-type zinc fingers follow at residues 544–561 (GKCY…NCPV) and 580–597 (DLCP…QCRS). The disordered stretch occupies residues 598-641 (KFDKNGQPLSGNEQRGQPQAPQQTGAFPIQPFVPQGFQDNNPHC). The span at 604–622 (QPLSGNEQRGQPQAPQQTG) shows a compositional bias: polar residues.

The protein belongs to the beta type-B retroviral Gag protein family. HERV class-II K(HML-2) gag subfamily. In terms of processing, myristoylation is essential for retroviral assembly. Alteration of the glycine residue leads to a block in the budding of particles and an accumulation of Gag inside the cell. Post-translationally, specific enzymatic cleavages may yield mature proteins.

It localises to the cell membrane. Its function is as follows. The products of the Gag polyproteins of infectious retroviruses perform highly complex orchestrated tasks during the assembly, budding, maturation, and infection stages of the viral replication cycle. During viral assembly, the proteins form membrane associations and self-associations that ultimately result in budding of an immature virion from the infected cell. Gag precursors also function during viral assembly to selectively bind and package two plus strands of genomic RNA. Endogenous Gag proteins may have kept, lost or modified their original function during evolution. The sequence is that of Endogenous retrovirus group K member 8 Gag polyprotein (ERVK-8) from Homo sapiens (Human).